A 711-amino-acid chain; its full sequence is Polyribonucleotide nucleotidyltransferase (711 aa).

2 residues coordinate Mg(2+): Asp490 and Asp496. The KH domain maps to 557–616; it reads PRIETMQIPTDKIREVIGSGGKVIREIVETSGAKVDINDDGIIKIASANGEAIKKAYEMI. In terms of domain architecture, S1 motif spans 626–694; that stretch reads GKVYTGTVVK…DRGKVRLSMK (69 aa).

Belongs to the polyribonucleotide nucleotidyltransferase family. It depends on Mg(2+) as a cofactor.

The protein localises to the cytoplasm. The catalysed reaction is RNA(n+1) + phosphate = RNA(n) + a ribonucleoside 5'-diphosphate. Involved in mRNA degradation. Catalyzes the phosphorolysis of single-stranded polyribonucleotides processively in the 3'- to 5'-direction. In Dinoroseobacter shibae (strain DSM 16493 / NCIMB 14021 / DFL 12), this protein is Polyribonucleotide nucleotidyltransferase.